Here is a 189-residue protein sequence, read N- to C-terminus: Peptidyl-tRNA hydrolase (189 aa).

Tyr14 contacts tRNA. His19 (proton acceptor) is an active-site residue. TRNA contacts are provided by Tyr64, Asn66, and Asn112.

Belongs to the PTH family. In terms of assembly, monomer.

It localises to the cytoplasm. The catalysed reaction is an N-acyl-L-alpha-aminoacyl-tRNA + H2O = an N-acyl-L-amino acid + a tRNA + H(+). In terms of biological role, hydrolyzes ribosome-free peptidyl-tRNAs (with 1 or more amino acids incorporated), which drop off the ribosome during protein synthesis, or as a result of ribosome stalling. Catalyzes the release of premature peptidyl moieties from peptidyl-tRNA molecules trapped in stalled 50S ribosomal subunits, and thus maintains levels of free tRNAs and 50S ribosomes. The polypeptide is Peptidyl-tRNA hydrolase (Clostridium botulinum (strain Langeland / NCTC 10281 / Type F)).